A 418-amino-acid chain; its full sequence is EPS I polysaccharide export inner membrane protein EpsF (418 aa).

10 consecutive transmembrane segments (helical) span residues Val21 to Ile41, Cys45 to Ala65, Pro142 to Tyr162, Tyr170 to Ile190, Ala222 to Leu242, Leu262 to Met282, Ser296 to Leu316, Met326 to Gly346, Ala347 to Ala367, and Lys377 to Ala397.

This sequence to S.marcescens SfuB.

The protein localises to the cell inner membrane. Its function is as follows. Probably involved in polymerization and/or export of exopolysaccharide EPS I which functions as a virulence factor. May play a role in export of EPS I or its intermediates across the membranes. This chain is EPS I polysaccharide export inner membrane protein EpsF (epsF), found in Ralstonia nicotianae (strain ATCC BAA-1114 / GMI1000) (Ralstonia solanacearum).